The sequence spans 122 residues: Large ribosomal subunit protein uL14c (122 aa).

This sequence belongs to the universal ribosomal protein uL14 family. Part of the 50S ribosomal subunit.

Its subcellular location is the plastid. The protein resides in the chloroplast. Its function is as follows. Binds to 23S rRNA. This chain is Large ribosomal subunit protein uL14c, found in Oenothera biennis (German evening primrose).